A 404-amino-acid chain; its full sequence is Corticosteroid-binding globulin (404 aa).

The signal sequence occupies residues 1 to 30; it reads MAWSTRTMMSLALYTCFLWLLTSGLKTVQS. Residues asparagine 95 and asparagine 225 are each glycosylated (N-linked (GlcNAc...) asparagine). Glutamine 253 serves as a coordination point for cortisol. N-linked (GlcNAc...) asparagine glycosylation occurs at asparagine 259. A cortisol-binding site is contributed by glutamate 285. Residue asparagine 326 is glycosylated (N-linked (GlcNAc...) asparagine). Residue tryptophan 392 participates in cortisol binding.

It belongs to the serpin family. In terms of tissue distribution, expressed by the liver; secreted in plasma.

The protein localises to the secreted. Major transport protein for glucocorticoids and progestins in the blood of almost all vertebrate species. This is Corticosteroid-binding globulin (SERPINA6) from Mesocricetus auratus (Golden hamster).